The primary structure comprises 403 residues: Acetylornithine aminotransferase (403 aa).

Pyridoxal 5'-phosphate contacts are provided by residues 107 to 108 and Phe-140; that span reads GA. Arg-143 is a binding site for N(2)-acetyl-L-ornithine. 225–228 is a pyridoxal 5'-phosphate binding site; it reads DEVQ. An N6-(pyridoxal phosphate)lysine modification is found at Lys-254. Ser-282 provides a ligand contact to N(2)-acetyl-L-ornithine. A pyridoxal 5'-phosphate-binding site is contributed by Thr-283.

It belongs to the class-III pyridoxal-phosphate-dependent aminotransferase family. ArgD subfamily. Homodimer. Requires pyridoxal 5'-phosphate as cofactor.

Its subcellular location is the cytoplasm. The catalysed reaction is N(2)-acetyl-L-ornithine + 2-oxoglutarate = N-acetyl-L-glutamate 5-semialdehyde + L-glutamate. The protein operates within amino-acid biosynthesis; L-arginine biosynthesis; N(2)-acetyl-L-ornithine from L-glutamate: step 4/4. This is Acetylornithine aminotransferase from Vibrio vulnificus (strain YJ016).